Here is a 478-residue protein sequence, read N- to C-terminus: D(1B) dopamine receptor (478 aa).

The Extracellular portion of the chain corresponds to 1 to 38; that stretch reads MLPPGRNGTAHRARLGLQRQLAQVDAPGGSAAPLGPAQ. Asn7 is a glycosylation site (N-linked (GlcNAc...) asparagine). Residues 39-64 form a helical membrane-spanning segment; that stretch reads VVTAGLLTLLIVWTLLGNVLVCAAIV. Over 65–75 the chain is Cytoplasmic; it reads RSRHLRAKMTN. Residues 76–102 form a helical membrane-spanning segment; sequence IFIVSLAVSDLFVALLVMPWKAVAEVA. Residues 103 to 111 lie on the Extracellular side of the membrane; that stretch reads GYWPFGAFC. A disulfide bridge connects residues Cys111 and Cys211. A helical transmembrane segment spans residues 112–134; it reads DIWVAFDIMCSTASILNLCIISV. Over 135–153 the chain is Cytoplasmic; that stretch reads DRYWAISRPFRYERKMTQR. The helical transmembrane segment at 154 to 179 threads the bilayer; the sequence is VALVMVALAWTLSILISFIPVQLNWH. The Extracellular segment spans residues 180–215; the sequence is RDKAGSQGREGLLSNETPWEEGWELDGRTENCDSSL. A helical transmembrane segment spans residues 216–240; sequence NRTYAISSSLISFYIPVAIMIVTYT. The Cytoplasmic portion of the chain corresponds to 241–289; that stretch reads RIYRIAQVQIRRISSLERAAEHAQSCRSRGACEPDPSLRASIKKETKVF. Residues 290 to 317 form a helical membrane-spanning segment; sequence KTLSVIMGVFVCCWLPFFILNCMVPFCS. At 318-335 the chain is on the extracellular side; it reads SGDAQGPRTGFPCVSETT. The helical transmembrane segment at 336–357 threads the bilayer; the sequence is FDIFVWFGWANSSLNPIIYAFN. Topologically, residues 358–478 are cytoplasmic; sequence ADFRKVFAQL…LTPNCFHKTA (121 aa). Residue Cys370 is the site of S-palmitoyl cysteine attachment. The interval 416-446 is disordered; that stretch reads GDREVGEEEEAEEEGPFDHMSQISPTTPDGD. Acidic residues predominate over residues 420-430; it reads VGEEEEAEEEG.

Belongs to the G-protein coupled receptor 1 family.

It is found in the cell membrane. In terms of biological role, dopamine receptor whose activity is mediated by G proteins which activate adenylyl cyclase. The chain is D(1B) dopamine receptor (Drd5) from Mus musculus (Mouse).